Consider the following 56-residue polypeptide: Pituitary adenylate cyclase-activating polypeptide (56 aa).

Residues 42–50 (VKKYLAAVL) are important for receptor binding. At leucine 50 the chain carries Leucine amide.

The protein belongs to the glucagon family. Interacts with ADCYAP1R1 (via N-terminal extracellular domain).

It is found in the secreted. PACAP is a neuropeptide involved in diverse array of physiological processes through activating the PACAP subfamily of class B1 G protein-coupled receptors: VIP receptor 1 (VIPR1), VIP receptor 2 (VIPR2), and PACAP type I receptor (ADCYAP1R1). Exerts neuroprotective and general cytoprotective effects due to anti-apoptotic, anti-inflammatory, and antioxidant actions. In Heloderma suspectum (Gila monster), this protein is Pituitary adenylate cyclase-activating polypeptide (Adcyap1).